We begin with the raw amino-acid sequence, 545 residues long: Sterol O-acyltransferase 1 (545 aa).

Methionine 1 carries the post-translational modification N-acetylmethionine. Residues methionine 1–alanine 24 form a disordered region. Residues methionine 1 to isoleucine 133 lie on the Cytoplasmic side of the membrane. Serine 7 is subject to Phosphoserine. Residues arginine 9 to asparagine 18 are compositionally biased toward polar residues. Residue histidine 132 coordinates cholesterol. Residues arginine 134 to aspartate 155 form a helical membrane-spanning segment. Residues tyrosine 156–glutamine 175 lie on the Lumenal side of the membrane. Residues phenylalanine 176–tryptophan 201 form a helical membrane-spanning segment. The Cytoplasmic portion of the chain corresponds to alanine 202 to isoleucine 213. Residues tyrosine 214 to leucine 239 traverse the membrane as a helical segment. At alanine 240 to serine 247 the chain is on the lumenal side. The helical transmembrane segment at arginine 248–proline 271 threads the bilayer. Topologically, residues arginine 272–arginine 314 are cytoplasmic. The chain crosses the membrane as a helical span at residues tryptophan 315–isoleucine 347. The Lumenal segment spans residues lysine 348–serine 364. Residues isoleucine 365–methionine 390 form a helical membrane-spanning segment. Over leucine 391–arginine 438 the chain is Cytoplasmic. The FYXDWWN motif motif lies at phenylalanine 398–asparagine 404. An acyl-CoA contacts are provided by asparagine 410, arginine 413, asparagine 416, histidine 420, tyrosine 428, and serine 451. A helical transmembrane segment spans residues phenylalanine 439 to leucine 463. Histidine 455 is a catalytic residue. At serine 464–valine 469 the chain is on the lumenal side. A helical membrane pass occupies residues leucine 470–valine 485. Residues asparagine 486–arginine 491 lie on the Cytoplasmic side of the membrane. The helical transmembrane segment at proline 492–cysteine 523 threads the bilayer. Residues cysteine 523 and cysteine 541 are joined by a disulfide bond. The Lumenal portion of the chain corresponds to proline 524–phenylalanine 545.

Belongs to the membrane-bound acyltransferase family. Sterol o-acyltransferase subfamily. May form homo- or heterodimers. Interacts with UBIAD1.

It is found in the endoplasmic reticulum membrane. It catalyses the reaction a sterol + a long-chain fatty acyl-CoA = a long-chain 3-hydroxysterol ester + CoA. The catalysed reaction is cholesterol + an acyl-CoA = a cholesterol ester + CoA. The enzyme catalyses cholesterol + (9Z)-octadecenoyl-CoA = cholesteryl (9Z-octadecenoate) + CoA. It carries out the reaction cholesterol + hexadecanoyl-CoA = cholesteryl hexadecanoate + CoA. It catalyses the reaction octadecanoyl-CoA + cholesterol = cholesteryl octadecanoate + CoA. The catalysed reaction is (9Z,12Z)-octadecadienoyl-CoA + cholesterol = cholesteryl (9Z,12Z)-octadecadienoate + CoA. The enzyme catalyses (5Z,8Z,11Z,14Z)-eicosatetraenoyl-CoA + cholesterol = cholesteryl (5Z,8Z,11Z,14Z)-eicosatetraenoate + CoA. It carries out the reaction (9Z)-hexadecenoyl-CoA + cholesterol = cholesteryl (9Z)-hexadecenoate + CoA. It catalyses the reaction (11Z)-octadecenoyl-CoA + cholesterol = cholesteryl (11Z)-octadecenoate + CoA. The catalysed reaction is (7Z)-octadecenoyl-CoA + cholesterol = cholesteryl (7Z)-octadecenoate + CoA. In terms of biological role, catalyzes the formation of fatty acid-cholesterol esters, which are less soluble in membranes than cholesterol. Plays a role in lipoprotein assembly and dietary cholesterol absorption. Preferentially utilizes oleoyl-CoA ((9Z)-octadecenoyl-CoA) as substrate: shows a higher activity towards an acyl-CoA substrate with a double bond at the delta-9 position (9Z) than towards saturated acyl-CoA or an unsaturated acyl-CoA with a double bond at the delta-7 (7Z) or delta-11 (11Z) positions. In Rattus norvegicus (Rat), this protein is Sterol O-acyltransferase 1.